A 909-amino-acid polypeptide reads, in one-letter code: Alanine--tRNA ligase (909 aa).

The Zn(2+) site is built by His600, His604, Cys704, and His708.

The protein belongs to the class-II aminoacyl-tRNA synthetase family. It depends on Zn(2+) as a cofactor.

It is found in the cytoplasm. It carries out the reaction tRNA(Ala) + L-alanine + ATP = L-alanyl-tRNA(Ala) + AMP + diphosphate. In terms of biological role, catalyzes the attachment of alanine to tRNA(Ala) in a two-step reaction: alanine is first activated by ATP to form Ala-AMP and then transferred to the acceptor end of tRNA(Ala). Also edits incorrectly charged Ser-tRNA(Ala) and Gly-tRNA(Ala) via its editing domain. The polypeptide is Alanine--tRNA ligase (Staphylothermus marinus (strain ATCC 43588 / DSM 3639 / JCM 9404 / F1)).